Consider the following 381-residue polypeptide: Succinate--CoA ligase [ADP-forming] subunit beta (381 aa).

Residues 9–236 enclose the ATP-grasp domain; sequence KTIFADAGIP…ESYEDDLERK (228 aa). ATP contacts are provided by residues Lys-45, 52–54, Glu-91, Val-94, and Glu-99; that span reads GRG. Mg(2+) is bound by residues Asn-191 and Asp-205. Residues Asn-256 and 313-315 contribute to the substrate site; that span reads GIT.

It belongs to the succinate/malate CoA ligase beta subunit family. As to quaternary structure, heterotetramer of two alpha and two beta subunits. Mg(2+) serves as cofactor.

It catalyses the reaction succinate + ATP + CoA = succinyl-CoA + ADP + phosphate. The enzyme catalyses GTP + succinate + CoA = succinyl-CoA + GDP + phosphate. Its pathway is carbohydrate metabolism; tricarboxylic acid cycle; succinate from succinyl-CoA (ligase route): step 1/1. Its function is as follows. Succinyl-CoA synthetase functions in the citric acid cycle (TCA), coupling the hydrolysis of succinyl-CoA to the synthesis of either ATP or GTP and thus represents the only step of substrate-level phosphorylation in the TCA. The beta subunit provides nucleotide specificity of the enzyme and binds the substrate succinate, while the binding sites for coenzyme A and phosphate are found in the alpha subunit. In Halorubrum lacusprofundi (strain ATCC 49239 / DSM 5036 / JCM 8891 / ACAM 34), this protein is Succinate--CoA ligase [ADP-forming] subunit beta.